The primary structure comprises 650 residues: Macrolide export ATP-binding/permease protein MacB (650 aa).

Residues 9-248 (IELIDLERVF…RPLGRPPGGA (240 aa)) enclose the ABC transporter domain. Position 45-52 (45-52 (GQSGSGKS)) interacts with ATP. The next 4 helical transmembrane spans lie at 276 to 296 (ALTLLGVVIGVAAVVTMMAIG), 525 to 545 (LTLLLGAVALISLLVGGIGVM), 580 to 600 (AVAVCGVGGLAGVGLGLGAAL), and 615 to 635 (PPIVAFCCAFLTGLLFGYLPA).

Belongs to the ABC transporter superfamily. Macrolide exporter (TC 3.A.1.122) family. In terms of assembly, homodimer.

Its subcellular location is the cell inner membrane. Functionally, non-canonical ABC transporter that contains transmembrane domains (TMD), which form a pore in the inner membrane, and an ATP-binding domain (NBD), which is responsible for energy generation. Confers resistance against macrolides. This is Macrolide export ATP-binding/permease protein MacB from Rhodospirillum rubrum (strain ATCC 11170 / ATH 1.1.1 / DSM 467 / LMG 4362 / NCIMB 8255 / S1).